We begin with the raw amino-acid sequence, 89 residues long: Otospiralin (89 aa).

The N-terminal stretch at 1–21 (MQPCVLWWLALGLLLGIPAGA) is a signal peptide.

The protein belongs to the otospiralin family. Ear specific. Expressed in the cochlea and vestibule, but not in the cochlear nerve, cochlear nucleus, spinal chord, muscle, cerebral cortex, cerebellum, diencephalon and olfactory bulb. In the cochlea, expressed in fibrocytes of the spiral limbus, spiral ligament and suprastrial zone. In the vestibule, expressed in cells located to the stroma below the macular and crista sensory epithelia and in the subepithelial layer of the walls of semicircular canals and maculae.

It localises to the secreted. Functionally, may be essential for the survival of the neurosensory epithelium of the inner ear. This Rattus norvegicus (Rat) protein is Otospiralin (Otos).